A 1194-amino-acid polypeptide reads, in one-letter code: Probable disease resistance protein RPP1 (1194 aa).

Positions 1 to 27 (MGSVMSLGCSKRKATNQDVDSESRKRR) are disordered. Positions 96–260 (WKHDVFPSFH…KISTDVSNML (165 aa)) constitute a TIR domain. An NAD(+)-binding site is contributed by 105 to 110 (HGADVR). Glu-171 is an active-site residue. An NB-ARC domain is found at 280–535 (DMLEQLLRLD…ACLFNGESTT (256 aa)). 14 LRR repeats span residues 623–647 (LSNT…HFVR), 658–681 (QLAL…GYES), 690–713 (PEFL…TKQL), 714–737 (RNLK…STAT), 739–760 (LEEL…IEKL), 761–784 (TSLQ…ENAT), 786–807 (LREL…IGTA), 808–831 (TNLK…IGDI), 832–855 (TDLE…IGNL), 866–878 (CSKL…NINL), 879–899 (KSLD…PEIS), 900–922 (THIS…IMSW), 943–965 (FDII…VKRM), and 966–991 (SRLR…SLDY). Residues 1170–1194 (RRSSSPDLSPESSRVSSYDHCLRGD) are disordered. The segment covering 1171–1185 (RSSSPDLSPESSRVS) has biased composition (low complexity).

It belongs to the disease resistance TIR-NB-LRR family.

The catalysed reaction is NAD(+) + H2O = ADP-D-ribose + nicotinamide + H(+). Its function is as follows. TIR-NB-LRR receptor-like protein that confers resistance to the pathogen Hyaloperonospora arabidopsis. Probably acts as a NAD(+) hydrolase (NADase): in response to activation, catalyzes cleavage of NAD(+) into ADP-D-ribose (ADPR) and nicotinamide; NAD(+) cleavage triggering a defense system that promotes cell death. This chain is Probable disease resistance protein RPP1, found in Arabidopsis thaliana (Mouse-ear cress).